The primary structure comprises 394 residues: Exodeoxyribonuclease 7 large subunit (394 aa).

Belongs to the XseA family. In terms of assembly, heterooligomer composed of large and small subunits.

It localises to the cytoplasm. It catalyses the reaction Exonucleolytic cleavage in either 5'- to 3'- or 3'- to 5'-direction to yield nucleoside 5'-phosphates.. Functionally, bidirectionally degrades single-stranded DNA into large acid-insoluble oligonucleotides, which are then degraded further into small acid-soluble oligonucleotides. In Thermotoga sp. (strain RQ2), this protein is Exodeoxyribonuclease 7 large subunit.